The primary structure comprises 451 residues: GTPase Der (451 aa).

2 consecutive EngA-type G domains span residues 5 to 170 (PVVA…VEPE) and 186 to 359 (IKLA…AAAF). GTP contacts are provided by residues 11-18 (GRPNVGKS), 58-62 (DTGGF), 122-125 (NKAE), 192-199 (GRPNVGKS), 239-243 (DTAGL), and 304-307 (NKWD). Residues 360 to 444 (AKLSTPKLTR…PLRIEFKSSR (85 aa)) enclose the KH-like domain.

The protein belongs to the TRAFAC class TrmE-Era-EngA-EngB-Septin-like GTPase superfamily. EngA (Der) GTPase family. As to quaternary structure, associates with the 50S ribosomal subunit.

In terms of biological role, GTPase that plays an essential role in the late steps of ribosome biogenesis. The sequence is that of GTPase Der from Bordetella petrii (strain ATCC BAA-461 / DSM 12804 / CCUG 43448).